The sequence spans 95 residues: UPF0298 protein LVIS_1401 (95 aa).

It belongs to the UPF0298 family.

The protein localises to the cytoplasm. The chain is UPF0298 protein LVIS_1401 from Levilactobacillus brevis (strain ATCC 367 / BCRC 12310 / CIP 105137 / JCM 1170 / LMG 11437 / NCIMB 947 / NCTC 947) (Lactobacillus brevis).